We begin with the raw amino-acid sequence, 217 residues long: Histone H1C (217 aa).

Low complexity-rich tracts occupy residues 1–11 (MAETASTETTP) and 28–45 (KKAA…PSAS). 2 disordered regions span residues 1-45 (MAET…PSAS) and 123-217 (VAKK…AAKK). The H15 domain maps to 40-113 (SGPSASELIV…GASGSFKLNK (74 aa)). Basic residues-rich tracts occupy residues 123–151 (VAKK…KPKK) and 159–217 (SPKK…AAKK).

It belongs to the histone H1/H5 family.

The protein resides in the nucleus. Its subcellular location is the chromosome. Functionally, histones H1 are necessary for the condensation of nucleosome chains into higher-order structures. The chain is Histone H1C from Xenopus laevis (African clawed frog).